A 70-amino-acid polypeptide reads, in one-letter code: U-scutigerotoxin(02)-Tl1a (70 aa).

Positions 1-17 (MKYILLGLLLMVVLANA) are cleaved as a signal peptide.

It belongs to the scutigerotoxin-02 family. In terms of processing, contains 4 disulfide bonds. Expressed by the venom gland.

The protein localises to the secreted. The chain is U-scutigerotoxin(02)-Tl1a from Thereuopoda longicornis (Long-legged centipede).